The chain runs to 80 residues: UPF0248 protein YG5714_2801 (80 aa).

It belongs to the UPF0248 family.

This Saccharolobus islandicus (strain Y.G.57.14 / Yellowstone #1) (Sulfolobus islandicus) protein is UPF0248 protein YG5714_2801.